The chain runs to 157 residues: MRIGHGYDVHRFAEGDFITLGGVRIAHGFGLLAHSDGDVLLHALSDALLGAAALGDIGKHFPDTDPQFKGADSRVLLRHVLTLIHGKGWKVGNVDATIVAQAPKMAPHIDAMRALIAEDLQVEPDQVNVKATTTEKLGFTGREEGIAVHAVALLLRA.

The a divalent metal cation site is built by aspartate 8 and histidine 10. Residues 8–10 (DVH) and 34–35 (HS) contribute to the 4-CDP-2-C-methyl-D-erythritol 2-phosphate site. Histidine 42 provides a ligand contact to a divalent metal cation. Residues 56–58 (DIG), 61–65 (FPDTD), 100–106 (AQAPKMA), 132–135 (TTTE), phenylalanine 139, and arginine 142 contribute to the 4-CDP-2-C-methyl-D-erythritol 2-phosphate site.

The protein belongs to the IspF family. In terms of assembly, homotrimer. A divalent metal cation is required as a cofactor.

The catalysed reaction is 4-CDP-2-C-methyl-D-erythritol 2-phosphate = 2-C-methyl-D-erythritol 2,4-cyclic diphosphate + CMP. Its pathway is isoprenoid biosynthesis; isopentenyl diphosphate biosynthesis via DXP pathway; isopentenyl diphosphate from 1-deoxy-D-xylulose 5-phosphate: step 4/6. Its function is as follows. Involved in the biosynthesis of isopentenyl diphosphate (IPP) and dimethylallyl diphosphate (DMAPP), two major building blocks of isoprenoid compounds. Catalyzes the conversion of 4-diphosphocytidyl-2-C-methyl-D-erythritol 2-phosphate (CDP-ME2P) to 2-C-methyl-D-erythritol 2,4-cyclodiphosphate (ME-CPP) with a corresponding release of cytidine 5-monophosphate (CMP). The chain is 2-C-methyl-D-erythritol 2,4-cyclodiphosphate synthase from Pseudomonas syringae pv. syringae (strain B728a).